Here is a 207-residue protein sequence, read N- to C-terminus: Octanoyltransferase (207 aa).

The 177-residue stretch at 27-203 folds into the BPL/LPL catalytic domain; sequence ADTEDELWVV…HLETQFTPKA (177 aa). Substrate is bound by residues 66–73, 133–135, and 146–148; these read RGGQITYH, SLG, and GLA. The Acyl-thioester intermediate role is filled by Cys164.

It belongs to the LipB family.

Its subcellular location is the cytoplasm. It catalyses the reaction octanoyl-[ACP] + L-lysyl-[protein] = N(6)-octanoyl-L-lysyl-[protein] + holo-[ACP] + H(+). It functions in the pathway protein modification; protein lipoylation via endogenous pathway; protein N(6)-(lipoyl)lysine from octanoyl-[acyl-carrier-protein]: step 1/2. Functionally, catalyzes the transfer of endogenously produced octanoic acid from octanoyl-acyl-carrier-protein onto the lipoyl domains of lipoate-dependent enzymes. Lipoyl-ACP can also act as a substrate although octanoyl-ACP is likely to be the physiological substrate. This chain is Octanoyltransferase, found in Neisseria meningitidis serogroup B (strain ATCC BAA-335 / MC58).